The chain runs to 664 residues: DNA ligase (664 aa).

NAD(+)-binding positions include 32–36 and 80–81; these read DKEYD and SL. K122 (N6-AMP-lysine intermediate) is an active-site residue. 3 residues coordinate NAD(+): R144, E178, and K314. Zn(2+) contacts are provided by C407, C410, C423, and C429. Residues 587–664 form the BRCT domain; it reads IDENPFMGKT…NEEEFSNKIK (78 aa).

This sequence belongs to the NAD-dependent DNA ligase family. LigA subfamily. The cofactor is Mg(2+). It depends on Mn(2+) as a cofactor.

It carries out the reaction NAD(+) + (deoxyribonucleotide)n-3'-hydroxyl + 5'-phospho-(deoxyribonucleotide)m = (deoxyribonucleotide)n+m + AMP + beta-nicotinamide D-nucleotide.. Functionally, DNA ligase that catalyzes the formation of phosphodiester linkages between 5'-phosphoryl and 3'-hydroxyl groups in double-stranded DNA using NAD as a coenzyme and as the energy source for the reaction. It is essential for DNA replication and repair of damaged DNA. The polypeptide is DNA ligase (Clostridium botulinum (strain Kyoto / Type A2)).